Reading from the N-terminus, the 578-residue chain is GRAM domain-containing protein 4 (578 aa).

Residues histidine 83–arginine 135 adopt a coiled-coil conformation. The segment at alanine 132 to glutamine 157 is disordered. Positions serine 139–alanine 154 are enriched in polar residues. Transmembrane regions (helical) follow at residues isoleucine 236 to phenylalanine 256, methionine 334 to tyrosine 354, and threonine 356 to phenylalanine 376. The region spanning serine 446–lysine 524 is the GRAM domain.

The protein localises to the mitochondrion membrane. It is found in the endoplasmic reticulum membrane. Functionally, plays a role as a mediator of e2f1-induced apoptosis in the absence of p53/TP53. This chain is GRAM domain-containing protein 4 (gramd4), found in Xenopus laevis (African clawed frog).